We begin with the raw amino-acid sequence, 689 residues long: Armadillo-like helical domain-containing protein 3 (689 aa).

The helical transmembrane segment at 520-538 (IFTLALMIVNLFNMFITYG) threads the bilayer.

The protein belongs to the ARMH3 family. Interacts with PI4KB. Interacts with GBF1.

It localises to the golgi apparatus membrane. Its subcellular location is the cytoplasm. In terms of biological role, involved in GBF1 recruitment, Golgi maintenance and protein secretion. The chain is Armadillo-like helical domain-containing protein 3 from Homo sapiens (Human).